Here is a 130-residue protein sequence, read N- to C-terminus: Protein ApaG (130 aa).

The ApaG domain maps to 3 to 127 (RALTKDIEVV…FSLDSPGLLR (125 aa)).

The polypeptide is Protein ApaG (Rhizobium leguminosarum bv. trifolii (strain WSM2304)).